A 354-amino-acid polypeptide reads, in one-letter code: UDP-N-acetylglucosamine--N-acetylmuramyl-(pentapeptide) pyrophosphoryl-undecaprenol N-acetylglucosamine transferase (354 aa).

UDP-N-acetyl-alpha-D-glucosamine is bound by residues 11 to 13 (TAG), arginine 164, serine 194, and glutamine 289.

Belongs to the glycosyltransferase 28 family. MurG subfamily.

It localises to the cell membrane. The catalysed reaction is di-trans,octa-cis-undecaprenyl diphospho-N-acetyl-alpha-D-muramoyl-L-alanyl-D-glutamyl-meso-2,6-diaminopimeloyl-D-alanyl-D-alanine + UDP-N-acetyl-alpha-D-glucosamine = di-trans,octa-cis-undecaprenyl diphospho-[N-acetyl-alpha-D-glucosaminyl-(1-&gt;4)]-N-acetyl-alpha-D-muramoyl-L-alanyl-D-glutamyl-meso-2,6-diaminopimeloyl-D-alanyl-D-alanine + UDP + H(+). It participates in cell wall biogenesis; peptidoglycan biosynthesis. Functionally, cell wall formation. Catalyzes the transfer of a GlcNAc subunit on undecaprenyl-pyrophosphoryl-MurNAc-pentapeptide (lipid intermediate I) to form undecaprenyl-pyrophosphoryl-MurNAc-(pentapeptide)GlcNAc (lipid intermediate II). The sequence is that of UDP-N-acetylglucosamine--N-acetylmuramyl-(pentapeptide) pyrophosphoryl-undecaprenol N-acetylglucosamine transferase from Clostridium botulinum (strain Kyoto / Type A2).